The chain runs to 220 residues: MELYLDTANVAEVERLARIFPIAGVTTNPSIVAASKESIWDVLPRLQNAIGEEGTLFAQTMSRDAKGMVEEAKRLNNAIPGIVVKIPVTAEGLAAIKLLKKEGIVTLGTAVYSASQGLLAALAGAKYVAPYVNRVDAQGGDGIRMVLELQTLLEHHAPDSMVLAASFKTPRQALDCLLAGCQAITLPLDVAQQMLNTPAVESAIEKFEQDWKNAFGNLNL.

The Schiff-base intermediate with substrate role is filled by lysine 85.

The protein belongs to the transaldolase family. Type 3A subfamily. As to quaternary structure, homodecamer.

It localises to the cytoplasm. It carries out the reaction beta-D-fructose 6-phosphate = dihydroxyacetone + D-glyceraldehyde 3-phosphate. In terms of biological role, catalyzes the reversible formation of fructose 6-phosphate from dihydroxyacetone and D-glyceraldehyde 3-phosphate via an aldolization reaction. In Salmonella typhi, this protein is Fructose-6-phosphate aldolase.